The following is a 103-amino-acid chain: Pro-corazonin (103 aa).

The signal sequence occupies residues 1 to 19 (MSANVTLLLIFVTLASVTA). Pyrrolidone carboxylic acid is present on Gln-20. An Asparagine amide modification is found at Asn-30. Residues 34-103 (DQGHLRPELK…NLNAMMDAFY (70 aa)) constitute a propeptide that is removed on maturation.

In terms of tissue distribution, expressed in corpora cardiaca (CC), corpora allata (CA), antennal lobe (AL) and gnathal ganglion (GNG) (at protein level). Expression in CC and CA detected in all animals, expression in AL and in GNG in some animals.

It localises to the secreted. In terms of biological role, cardioactive peptide. Corazonin is probably involved in the physiological regulation of the heart beat. This chain is Pro-corazonin, found in Agrotis ipsilon (Black cutworm moth).